The chain runs to 662 residues: DNA ligase (662 aa).

Residues 31–35 (DYEYD), 80–81 (SL), and Glu109 contribute to the NAD(+) site. Lys111 functions as the N6-AMP-lysine intermediate in the catalytic mechanism. Arg132, Glu166, Lys282, and Lys306 together coordinate NAD(+). Residues Cys400, Cys403, Cys418, and Cys423 each coordinate Zn(2+). The BRCT domain maps to 581–662 (KVNNIFEGKT…FEEMLKGENI (82 aa)).

This sequence belongs to the NAD-dependent DNA ligase family. LigA subfamily. Mg(2+) is required as a cofactor. Mn(2+) serves as cofactor.

It catalyses the reaction NAD(+) + (deoxyribonucleotide)n-3'-hydroxyl + 5'-phospho-(deoxyribonucleotide)m = (deoxyribonucleotide)n+m + AMP + beta-nicotinamide D-nucleotide.. In terms of biological role, DNA ligase that catalyzes the formation of phosphodiester linkages between 5'-phosphoryl and 3'-hydroxyl groups in double-stranded DNA using NAD as a coenzyme and as the energy source for the reaction. It is essential for DNA replication and repair of damaged DNA. This chain is DNA ligase, found in Thermoanaerobacter pseudethanolicus (strain ATCC 33223 / 39E) (Clostridium thermohydrosulfuricum).